The following is a 271-amino-acid chain: Formamidopyrimidine-DNA glycosylase (271 aa).

Proline 2 serves as the catalytic Schiff-base intermediate with DNA. The active-site Proton donor is the glutamate 3. Lysine 56 functions as the Proton donor; for beta-elimination activity in the catalytic mechanism. 3 residues coordinate DNA: histidine 89, arginine 107, and lysine 151. The segment at 236-270 (NVYGRAGLQCRQCGTPVRLSRQGQRSTYFCPHCQR) adopts an FPG-type zinc-finger fold. Arginine 260 serves as the catalytic Proton donor; for delta-elimination activity.

Belongs to the FPG family. In terms of assembly, monomer. Requires Zn(2+) as cofactor.

The catalysed reaction is Hydrolysis of DNA containing ring-opened 7-methylguanine residues, releasing 2,6-diamino-4-hydroxy-5-(N-methyl)formamidopyrimidine.. The enzyme catalyses 2'-deoxyribonucleotide-(2'-deoxyribose 5'-phosphate)-2'-deoxyribonucleotide-DNA = a 3'-end 2'-deoxyribonucleotide-(2,3-dehydro-2,3-deoxyribose 5'-phosphate)-DNA + a 5'-end 5'-phospho-2'-deoxyribonucleoside-DNA + H(+). Involved in base excision repair of DNA damaged by oxidation or by mutagenic agents. Acts as a DNA glycosylase that recognizes and removes damaged bases. Has a preference for oxidized purines, such as 7,8-dihydro-8-oxoguanine (8-oxoG). Has AP (apurinic/apyrimidinic) lyase activity and introduces nicks in the DNA strand. Cleaves the DNA backbone by beta-delta elimination to generate a single-strand break at the site of the removed base with both 3'- and 5'-phosphates. The polypeptide is Formamidopyrimidine-DNA glycosylase (Acidovorax ebreus (strain TPSY) (Diaphorobacter sp. (strain TPSY))).